Consider the following 414-residue polypeptide: Enolase (414 aa).

Q156 serves as a coordination point for (2R)-2-phosphoglycerate. The Proton donor role is filled by E200. Residues D236, E281, and D308 each contribute to the Mg(2+) site. K333, R362, S363, and K384 together coordinate (2R)-2-phosphoglycerate. Residue K333 is the Proton acceptor of the active site.

The protein belongs to the enolase family. Mg(2+) is required as a cofactor.

The protein localises to the cytoplasm. The protein resides in the secreted. It is found in the cell surface. It catalyses the reaction (2R)-2-phosphoglycerate = phosphoenolpyruvate + H2O. The protein operates within carbohydrate degradation; glycolysis; pyruvate from D-glyceraldehyde 3-phosphate: step 4/5. Its function is as follows. Catalyzes the reversible conversion of 2-phosphoglycerate (2-PG) into phosphoenolpyruvate (PEP). It is essential for the degradation of carbohydrates via glycolysis. This is Enolase from Methanosphaera stadtmanae (strain ATCC 43021 / DSM 3091 / JCM 11832 / MCB-3).